Reading from the N-terminus, the 81-residue chain is Photosystem I iron-sulfur center (81 aa).

2 consecutive 4Fe-4S ferredoxin-type domains span residues Ala2–Trp31 and Ile39–Tyr68. The [4Fe-4S] cluster site is built by Cys11, Cys14, Cys17, Cys21, Cys48, Cys51, Cys54, and Cys58.

As to quaternary structure, the eukaryotic PSI reaction center is composed of at least 11 subunits. [4Fe-4S] cluster is required as a cofactor.

It localises to the plastid. The protein resides in the chloroplast thylakoid membrane. The catalysed reaction is reduced [plastocyanin] + hnu + oxidized [2Fe-2S]-[ferredoxin] = oxidized [plastocyanin] + reduced [2Fe-2S]-[ferredoxin]. Its function is as follows. Apoprotein for the two 4Fe-4S centers FA and FB of photosystem I (PSI); essential for photochemical activity. FB is the terminal electron acceptor of PSI, donating electrons to ferredoxin. The C-terminus interacts with PsaA/B/D and helps assemble the protein into the PSI complex. Required for binding of PsaD and PsaE to PSI. PSI is a plastocyanin-ferredoxin oxidoreductase, converting photonic excitation into a charge separation, which transfers an electron from the donor P700 chlorophyll pair to the spectroscopically characterized acceptors A0, A1, FX, FA and FB in turn. In Chlorokybus atmophyticus (Soil alga), this protein is Photosystem I iron-sulfur center.